A 1807-amino-acid chain; its full sequence is MWFPVTLLFLAGVAVATNNHEHAWETGNEYQYSVFGRTLAGVDKLKRQYTGIQYNGILTIQVKSPELLQAKFDNQHYAHIHQELSNGPDDFDDPKNVNYKRMPMSEKPFEIKLKHGIIRDLLFDRDVPTWEVNMMKAIVGQLQVDTQGENAINSKSIQVPSDESFAATFKAMEDSVSGKCEVLYEITPLTVNEIQAKQDRIPMPSLHSDGNHYEVKKLKNYERCQERQLYHYGFDIKSAGKKWAGQDKVISQLSVTEMVISGDLKRFTIQSTEMKNEIAVQPETSDSPIGNVYTITRLTLKKKNSISNSWFGPHEISNLESTGNLVYTFNNPFSDSDNRRVRHHSVSQNSEQENSSESSKSSSQSSSSSSSASSSSSSSSSSSSSSSSSSSSSSSSSSEEENENVVQTKAALQNIFLAPNIPLLPYFIGYKGKTILKSDKQNVMQFAKNLISEIAEEVQITSEGYEATMEKYTILKKLLRTMNRKQYAELEQYVLQFNKGSDSRANAWTTFRDAVLHAGTGPAYVTIENWIKSGQVKGAEAARLLSQLPKNVYLPTPNYVQAFFELIKSPMVTQQEYVNVSAPIALAELLRNSYIGQNYYPIYSFGFITLKKNDEVVGKYINYLANQLQQGYQENNSRKIQTYIFALGVTAHPKIISVFEPYLEHSLPASTYQRTLMVAALSDLAKVQPKLVGPIFYKLYLNENEAHEVRAMAVHEFILTDPPMITLQRIAKNTNYDTSKQVNAVVKSTLESLVHTKRSEWRHLANKARNVRYLVTSNNYGNWHSSGYHLDFQDWLVNGLSLQTIAGDDLIPKYVYVGVNSVFDFLDQPSVEAGYGLSSHRQFFNEISKQWYSHQADDERRRSRVEKLAQALQIKAKEQNNLEGHFLFNSVYDSAFYPYDRHRIREAVAALKQFLNGNNKLEGSAFNNYENIMSFANEDGLPFVYTLDAPTFTKAKVNFKQGGRTANSGTFQALIANNVQQQFGFVALFEHQKYIAGINNNRVLRVPVEYDVEFNSNNAKNFALKIRPQNLPRMGNELKLLHYSVVPFTTQQDLLDLKPTSNDKNTRPVFTSPVYKTTVQKDTFSIKVESDSIGKESDTESFVADVLRLTNANDDHYTKISTILTSDQIQKSEGHITMTYDTVTIGGNNDNSGQSSEEMESLHSISWKSNSKERRKQIANNLSKGIKSGEVYIFDVSYSVPMLHENEYVFTFGGMKSNSNQKLRGYFYWNSHAPQEVNYEVCFSHEMQYAPRATPLNFKYALKNSPRDEYKAVLKYGKTCATGNKVVITGSSSQSQQLRDIIENSSLPNNVWKRFQTGNKAVENCMKANDIAQMRDQIDVQFDLSNIVPESVRRYAKKIIEYLEKYVYKVCDNVSREEESEENTIKNTLLFASPVNRMWPNWLPQSVSDITSGWSPSFNSFGPSSESQWQTMRLNVADYPDEFESEKQSCTLDKDKVYTFDNQLYNVHLGKCKHVLLTTYPQDFHNRRNYIPENSKVAILAEDADNDSRNVYIWLGKQEIKLKKAGNNVQAVVNGQNVEISDKGYQKINGNEITFEILSLPDDSLSVVSEKYGINAVYDGKRVVISASDAYRNAVRGLCGNFDSRPNTDFVTPKNCLLTKPEEFAATYAMTQENCQGPAPENKRRAEQSTCHEFPENEQMNVISDREAGRMMTEGVNWGYHQANRNKEHGRGNKSHQNNKKQYQANSQESGSSESRNDKKKHNIVYRTRVVEEGDEICFTTTPLPACRQGARPTERYPKKADLYCMPRNDQSLDLKRRVEDGANPDFTRKSVSRMQVFQVPVSCSAA.

The first 16 residues, 1–16 (MWFPVTLLFLAGVAVA), serve as a signal peptide directing secretion. In terms of domain architecture, Vitellogenin spans 24–819 (WETGNEYQYS…LIPKYVYVGV (796 aa)). A disulfide bridge connects residues Cys180 and Cys224. A disordered region spans residues 334-402 (SDSDNRRVRH…SSSSSSEEEN (69 aa)). Over residues 346–397 (VSQNSEQENSSESSKSSSQSSSSSSSASSSSSSSSSSSSSSSSSSSSSSSSS) the composition is skewed to low complexity. Asn354, Asn579, Asn635, Asn1181, Asn1304, Asn1373, and Asn1506 each carry an N-linked (GlcNAc...) asparagine glycan. In terms of domain architecture, VWFD spans 1448 to 1636 (QSCTLDKDKV…TYAMTQENCQ (189 aa)). 2 disulfide bridges follow: Cys1450/Cys1599 and Cys1472/Cys1635. Disordered regions lie at residues 1635 to 1655 (CQGPAPENKRRAEQSTCHEFP) and 1684 to 1723 (NRNKEHGRGNKSHQNNKKQYQANSQESGSSESRNDKKKHN). A glycan (N-linked (GlcNAc...) asparagine) is linked at Asn1693. Positions 1700-1714 (KKQYQANSQESGSSE) are enriched in polar residues.

Its subcellular location is the secreted. Its function is as follows. Precursor of the egg-yolk proteins that are sources of nutrients during embryonic development. This is Vitellogenin-2 from Solenopsis invicta (Red imported fire ant).